The following is a 157-amino-acid chain: Phosphopantetheine adenylyltransferase (157 aa).

Serine 8 serves as a coordination point for substrate. Residues serine 8–phenylalanine 9 and histidine 16 contribute to the ATP site. Positions 40, 72, and 86 each coordinate substrate. ATP contacts are provided by residues glycine 87–arginine 89, glutamate 97, and tyrosine 122–serine 128.

Belongs to the bacterial CoaD family. As to quaternary structure, homohexamer. Mg(2+) serves as cofactor.

The protein localises to the cytoplasm. The enzyme catalyses (R)-4'-phosphopantetheine + ATP + H(+) = 3'-dephospho-CoA + diphosphate. Its pathway is cofactor biosynthesis; coenzyme A biosynthesis; CoA from (R)-pantothenate: step 4/5. Reversibly transfers an adenylyl group from ATP to 4'-phosphopantetheine, yielding dephospho-CoA (dPCoA) and pyrophosphate. In Gloeothece citriformis (strain PCC 7424) (Cyanothece sp. (strain PCC 7424)), this protein is Phosphopantetheine adenylyltransferase.